The chain runs to 185 residues: Ribosome-recycling factor (185 aa).

It belongs to the RRF family.

Its subcellular location is the cytoplasm. Responsible for the release of ribosomes from messenger RNA at the termination of protein biosynthesis. May increase the efficiency of translation by recycling ribosomes from one round of translation to another. This chain is Ribosome-recycling factor, found in Streptococcus pneumoniae serotype 2 (strain D39 / NCTC 7466).